An 850-amino-acid chain; its full sequence is Protein monoglycylase TTLL8 (850 aa).

Disordered regions lie at residues 1–29 (MEPE…QGIS) and 228–254 (RSSR…DAEN). One can recognise a TTL domain in the interval 222-580 (SHQSCSRSSR…DRSCDIGNFE (359 aa)). Residues lysine 354, 360 to 361 (RG), 392 to 395 (QKYI), 405 to 407 (KFD), and 449 to 450 (CN) each bind ATP. Residue arginine 360 coordinates a protein. Mg(2+)-binding residues include aspartate 527, glutamate 540, and asparagine 542. Glutamate 540 contacts ATP. Residues 627–652 (AQPLKARGPSAMPDPAQGPPSPALQR) are disordered.

Mg(2+) is required as a cofactor.

It localises to the cytoplasm. The protein resides in the cytoskeleton. It is found in the cell projection. The protein localises to the cilium. Its subcellular location is the cilium axoneme. It localises to the flagellum axoneme. It catalyses the reaction L-glutamyl-[protein] + glycine + ATP = glycyl-L-glutamyl-[protein] + ADP + phosphate + H(+). Its function is as follows. Monoglycylase which modifies both tubulin and non-tubulin proteins, adding a single glycine to the gamma-carboxyl groups of specific glutamate residues to generate monoglycine side chains within the C-terminal tail of target proteins. Not involved in elongation step of the polyglycylation reaction. Preferentially monoglycylates alpha-tubulin over beta-tubulin. Together with TTLL3, mediates microtubule glycylation of primary and motile cilia, which is essential for their stability and maintenance. Together with TTLL3, glycylates sperm flagella which regulates axonemal dynein motor activity, thereby controlling flagellar beat, directional sperm swimming and male fertility. Monoglycylates non-tubulin proteins such as ANP32A, ANP32B, SET, NCL and NAP1. This chain is Protein monoglycylase TTLL8, found in Homo sapiens (Human).